Consider the following 427-residue polypeptide: Glutamyl-tRNA reductase (427 aa).

Substrate-binding positions include 49-52 (TCNR), Ser101, 106-108 (EPQ), and Gln112. Cys50 (nucleophile) is an active-site residue. 181–186 (GAGETI) is a binding site for NADP(+). The tract at residues 407–427 (FPATPGYRHPPVRPDDADPAP) is disordered. Residues 418-427 (VRPDDADPAP) show a composition bias toward basic and acidic residues.

It belongs to the glutamyl-tRNA reductase family. In terms of assembly, homodimer.

The enzyme catalyses (S)-4-amino-5-oxopentanoate + tRNA(Glu) + NADP(+) = L-glutamyl-tRNA(Glu) + NADPH + H(+). It participates in porphyrin-containing compound metabolism; protoporphyrin-IX biosynthesis; 5-aminolevulinate from L-glutamyl-tRNA(Glu): step 1/2. Functionally, catalyzes the NADPH-dependent reduction of glutamyl-tRNA(Glu) to glutamate 1-semialdehyde (GSA). The chain is Glutamyl-tRNA reductase from Stenotrophomonas maltophilia (strain K279a).